Consider the following 117-residue polypeptide: Large ribosomal subunit protein uL18 (117 aa).

The protein belongs to the universal ribosomal protein uL18 family. As to quaternary structure, part of the 50S ribosomal subunit; part of the 5S rRNA/L5/L18/L25 subcomplex. Contacts the 5S and 23S rRNAs.

This is one of the proteins that bind and probably mediate the attachment of the 5S RNA into the large ribosomal subunit, where it forms part of the central protuberance. The polypeptide is Large ribosomal subunit protein uL18 (Leuconostoc citreum (strain KM20)).